Consider the following 320-residue polypeptide: Acetyl-coenzyme A carboxylase carboxyl transferase subunit beta (320 aa).

Positions 25-294 (VWTKCDSCGQ…AKDEDELLGE (270 aa)) constitute a CoA carboxyltransferase N-terminal domain. Residues Cys-29, Cys-32, Cys-48, and Cys-51 each coordinate Zn(2+). A C4-type zinc finger spans residues 29 to 51 (CDSCGQVLYRAELERNLEVCPKC). The span at 295–310 (EMIADDIESSDNEPEI) shows a compositional bias: acidic residues. A disordered region spans residues 295–320 (EMIADDIESSDNEPEINIETNKKEDV).

It belongs to the AccD/PCCB family. Acetyl-CoA carboxylase is a heterohexamer composed of biotin carboxyl carrier protein (AccB), biotin carboxylase (AccC) and two subunits each of ACCase subunit alpha (AccA) and ACCase subunit beta (AccD). Zn(2+) is required as a cofactor.

The protein resides in the cytoplasm. The enzyme catalyses N(6)-carboxybiotinyl-L-lysyl-[protein] + acetyl-CoA = N(6)-biotinyl-L-lysyl-[protein] + malonyl-CoA. Its pathway is lipid metabolism; malonyl-CoA biosynthesis; malonyl-CoA from acetyl-CoA: step 1/1. Component of the acetyl coenzyme A carboxylase (ACC) complex. Biotin carboxylase (BC) catalyzes the carboxylation of biotin on its carrier protein (BCCP) and then the CO(2) group is transferred by the transcarboxylase to acetyl-CoA to form malonyl-CoA. The polypeptide is Acetyl-coenzyme A carboxylase carboxyl transferase subunit beta (Proteus mirabilis (strain HI4320)).